The following is an 84-amino-acid chain: MANHKSSIKRIRKSQIRRLRNKYYAKTARNAVKNIRGTADKVQAGVLYKKVSKMLDKLAKKNVIHNNKANNLKSKLALYVNSLN.

It belongs to the bacterial ribosomal protein bS20 family.

Its function is as follows. Binds directly to 16S ribosomal RNA. This chain is Small ribosomal subunit protein bS20, found in Azobacteroides pseudotrichonymphae genomovar. CFP2.